The primary structure comprises 377 residues: 5-hydroxytryptamine receptor 1D (377 aa).

3 N-linked (GlcNAc...) asparagine glycosylation sites follow: Asn5, Asn17, and Asn21. The next 3 membrane-spanning stretches (helical) occupy residues 39 to 64 (ISLA…TTIL), 76 to 97 (LIGS…ISIA), and 110 to 134 (LCDI…VIAL). A disulfide bridge connects residues Cys111 and Cys188. Residues Asp118 and Cys122 each contribute to the serotonin site. Residues 135-137 (DRY) carry the DRY motif; important for ligand-induced conformation changes motif. 4 helical membrane-spanning segments follow: residues 155-176 (AAAM…PLFW), 195-218 (ISYT…VLYG), 301-326 (KTLG…VLPI), and 336-359 (GLFD…YTVF). Serotonin is bound at residue Ser321. Positions 352–356 (NPIIY) match the NPxxY motif; important for ligand-induced conformation changes and signaling motif.

This sequence belongs to the G-protein coupled receptor 1 family. As to quaternary structure, homodimer. Heterodimer with HTR1B.

It is found in the cell membrane. G-protein coupled receptor for 5-hydroxytryptamine (serotonin). Also functions as a receptor for ergot alkaloid derivatives, various anxiolytic and antidepressant drugs and other psychoactive substances. Ligand binding causes a conformation change that triggers signaling via guanine nucleotide-binding proteins (G proteins) and modulates the activity of downstream effectors, such as adenylate cyclase. HTR1D is coupled to G(i)/G(o) G alpha proteins and mediates inhibitory neurotransmission by inhibiting adenylate cyclase activity. Regulates the release of 5-hydroxytryptamine in the brain, and thereby affects neural activity. May also play a role in regulating the release of other neurotransmitters. May play a role in vasoconstriction. The protein is 5-hydroxytryptamine receptor 1D (HTR1D) of Oryctolagus cuniculus (Rabbit).